A 571-amino-acid chain; its full sequence is Wee1-like protein kinase 1-A (571 aa).

Residues 1–101 (MSLQPVPHRL…PDCPGTPPHK (101 aa)) form a disordered region. Pro residues predominate over residues 81 to 98 (PASPPGPAASPPDCPGTP). The 271-residue stretch at 224–494 (FHELEKIGSG…SMALVKHSVL (271 aa)) folds into the Protein kinase domain. ATP is bound by residues 230-238 (IGSGEFGSV) and lysine 253. Residue aspartate 351 is the Proton acceptor of the active site. Residues asparagine 356 and aspartate 388 each coordinate Mg(2+). Residues 500–539 (KNAEQLRIELNAEKFKNALLQKELKKAQIAKAAAEERALF) adopt a coiled-coil conformation.

Belongs to the protein kinase superfamily. Ser/Thr protein kinase family. WEE1 subfamily. As to expression, zygotically expressed. Expressed in regions of the embryo that are devoid of mitotic cells, such as the involuting mesoderm.

The protein resides in the nucleus. The catalysed reaction is L-tyrosyl-[protein] + ATP = O-phospho-L-tyrosyl-[protein] + ADP + H(+). Acts as a zygotic negative regulator of entry into mitosis (G2 to M transition) by protecting the nucleus from cytoplasmically activated cyclin B1-complexed cdk1 before the onset of mitosis by mediating phosphorylation of cdk1 on 'Tyr-15'. Specifically phosphorylates and inactivates cyclin B1-complexed cdk1 reaching a maximum during G2 phase and a minimum as cells enter M phase. Phosphorylation of cyclin B1-cdk1 occurs exclusively on 'Tyr-15' and phosphorylation of monomeric cdk1 does not occur. Involved in convergent extension of the paraxial mesoderm during neurulation by inhibiting the cell cycle. This is Wee1-like protein kinase 1-A (wee1-a) from Xenopus laevis (African clawed frog).